Reading from the N-terminus, the 261-residue chain is 3-methyl-2-oxobutanoate hydroxymethyltransferase (261 aa).

2 residues coordinate Mg(2+): Asp42 and Asp81. 3-methyl-2-oxobutanoate is bound by residues 42–43 (DS), Asp81, and Lys110. Glu112 is a binding site for Mg(2+). Glu179 serves as the catalytic Proton acceptor.

Belongs to the PanB family. As to quaternary structure, homodecamer; pentamer of dimers. Mg(2+) serves as cofactor.

The protein resides in the cytoplasm. The catalysed reaction is 3-methyl-2-oxobutanoate + (6R)-5,10-methylene-5,6,7,8-tetrahydrofolate + H2O = 2-dehydropantoate + (6S)-5,6,7,8-tetrahydrofolate. The protein operates within cofactor biosynthesis; (R)-pantothenate biosynthesis; (R)-pantoate from 3-methyl-2-oxobutanoate: step 1/2. Catalyzes the reversible reaction in which hydroxymethyl group from 5,10-methylenetetrahydrofolate is transferred onto alpha-ketoisovalerate to form ketopantoate. The protein is 3-methyl-2-oxobutanoate hydroxymethyltransferase of Thermus thermophilus (strain ATCC 27634 / DSM 579 / HB8).